Reading from the N-terminus, the 246-residue chain is Anamorsin homolog (246 aa).

The interval 1-124 is N-terminal SAM-like domain; the sequence is MRVVVVDLDG…ARGTAFSLKS (124 aa). The tract at residues 125-158 is linker; sequence RAVRVVTADAGWGADADVDDELIDESALLTELDV. Residues C168, C177, C180, and C182 each contribute to the [2Fe-2S] cluster site. The interval 168-182 is fe-S binding site A; sequence CDVGAGKKACKNCTC. Positions 206, 209, 217, and 220 each coordinate [4Fe-4S] cluster. 2 consecutive short sequence motifs (cx2C motif) follow at residues 206–209 and 217–220; these read CGNC and CAGC. The interval 206–220 is fe-S binding site B; the sequence is CGNCALGDAFRCAGC.

It belongs to the anamorsin family. In terms of assembly, monomer. Requires [2Fe-2S] cluster as cofactor. The cofactor is [4Fe-4S] cluster.

Its subcellular location is the cytoplasm. The protein localises to the mitochondrion intermembrane space. In terms of biological role, component of the cytosolic iron-sulfur (Fe-S) protein assembly (CIA) machinery. Required for the maturation of extramitochondrial Fe-S proteins. Part of an electron transfer chain functioning in an early step of cytosolic Fe-S biogenesis, facilitating the de novo assembly of a [4Fe-4S] cluster on the cytosolic Fe-S scaffold complex. Electrons are transferred from NADPH via a FAD- and FMN-containing diflavin oxidoreductase. Together with the diflavin oxidoreductase, also required for the assembly of the diferric tyrosyl radical cofactor of ribonucleotide reductase (RNR), probably by providing electrons for reduction during radical cofactor maturation in the catalytic small subunit. In Ostreococcus tauri, this protein is Anamorsin homolog.